The primary structure comprises 307 residues: MASEGAKRQPETQNGAAVGLAQVAESLECPGTEECLVPAHETCRSPGEDKCPVGHSLEPELQEEGIKVGEEGLNAGVEAGEERGPKPTSSIVRPAHGPKRKSEVELPPGVLQKKEEPEGSHSESSLSSKQHKKAKKRKSGGAPVPPAVASASAPAAETLGLEPFALPWVLAGKAQRLRPLYQYINYCNPELNQEEDGDREPEVEPEAELALVPEEPGVEQLQLQTLLPVAGELGLGLALPCPNPLVPLTHNLPPLVEEVGEEPGGLSSLRVSGSLKAEVDKTTQVDIDKMLSVCAAPLVPPLSPQYK.

2 stretches are compositionally biased toward basic and acidic residues: residues 42-52 (TCRSPGEDKCP) and 112-121 (QKKEEPEGSH). The disordered stretch occupies residues 42–153 (TCRSPGEDKC…VPPAVASASA (112 aa)). Residues 129–139 (KQHKKAKKRKS) are compositionally biased toward basic residues.

This is an uncharacterized protein from Mus musculus (Mouse).